Here is a 1713-residue protein sequence, read N- to C-terminus: Cell wall protein AWA1 (1713 aa).

Residues 1–23 (MFNRFNKLQAALALVLYSQSALG) form the signal peptide. Residue Asn34 is glycosylated (N-linked (GlcNAc...) asparagine). Disordered stretches follow at residues 80-117 (IAPS…SSSS), 256-327 (TSTT…AESI), and 359-939 (SSGI…STAS). Residues 256–275 (TSTTSDTYISSSSPSQVTSS) show a composition bias toward low complexity. Composition is skewed to polar residues over residues 276–327 (AEPT…AESI) and 359–368 (SSGISSSVEP). Positions 374-939 (PSSDESISST…QSTSSASTAS (566 aa)) are enriched in low complexity. Asn1133, Asn1241, and Asn1278 each carry an N-linked (GlcNAc...) asparagine glycan. Positions 1582–1603 (KTVTSEAPKETSETSETSAAPK) are disordered. A lipid anchor (GPI-anchor amidated alanine) is attached at Ala1692. Positions 1693–1713 (AGLNANTLNALVGIFVLAFFN) are cleaved as a propeptide — removed in mature form.

Belongs to the SRP1/TIP1 family. The GPI-anchor is attached to the protein in the endoplasmic reticulum and serves to target the protein to the cell surface. There, the glucosamine-inositol phospholipid moiety is cleaved off and the GPI-modified mannoprotein is covalently attached via its lipidless GPI glycan remnant to the 1,6-beta-glucan of the outer cell wall layer.

Its subcellular location is the secreted. The protein resides in the cell wall. It localises to the membrane. Its function is as follows. Involved in cell wall organization and biosynthesis. Confers cell surface hydrophobicity (CSH). This chain is Cell wall protein AWA1 (AWA1), found in Saccharomyces cerevisiae (strain Kyokai no. 7 / NBRC 101557) (Baker's yeast).